A 328-amino-acid polypeptide reads, in one-letter code: tRNA uridine(34) hydroxylase (328 aa).

The Rhodanese domain occupies 130–224 (LDEDTVVLDT…YGKDPEVQGE (95 aa)). C184 serves as the catalytic Cysteine persulfide intermediate.

It belongs to the TrhO family.

The catalysed reaction is uridine(34) in tRNA + AH2 + O2 = 5-hydroxyuridine(34) in tRNA + A + H2O. Catalyzes oxygen-dependent 5-hydroxyuridine (ho5U) modification at position 34 in tRNAs. The chain is tRNA uridine(34) hydroxylase from Streptococcus agalactiae serotype Ia (strain ATCC 27591 / A909 / CDC SS700).